The sequence spans 556 residues: Vacuolar protein 8 (556 aa).

Gly2 carries N-myristoyl glycine lipidation. S-palmitoyl cysteine attachment occurs at residues Cys4, Cys5, and Cys7. ARM repeat units lie at residues 38–74 (NRSE…AFAE), 75–115 (VTEK…NLAV), 117–156 (DSNK…NLAT), 158–197 (DQNK…NMTH), 199–238 (LENR…NIAV), 242–281 (NRKK…NLAS), 283–322 (ANYQ…NISI), 324–364 (PLNE…NLAA), and 408–447 (DDLK…NLCS).

The protein belongs to the beta-catenin family.

The protein resides in the vacuole membrane. Functionally, functions in both vacuole inheritance and protein targeting from the cytoplasm to vacuole. The protein is Vacuolar protein 8 (VAC8) of Komagataella pastoris (Yeast).